A 225-amino-acid chain; its full sequence is Cytidylate kinase (225 aa).

An ATP-binding site is contributed by 11–19 (GPAGAGKGT). Basic and acidic residues predominate over residues 169-185 (MDRIKSRIEERDARDQS). Residues 169-195 (MDRIKSRIEERDARDQSRATAPLAAAP) are disordered.

The protein belongs to the cytidylate kinase family. Type 1 subfamily.

It localises to the cytoplasm. It carries out the reaction CMP + ATP = CDP + ADP. It catalyses the reaction dCMP + ATP = dCDP + ADP. The protein is Cytidylate kinase of Magnetococcus marinus (strain ATCC BAA-1437 / JCM 17883 / MC-1).